We begin with the raw amino-acid sequence, 481 residues long: Inosine-5'-monophosphate dehydrogenase (481 aa).

2 consecutive CBS domains span residues 92 to 148 (VIND…SKKV) and 152 to 209 (MTKM…PEAN). NAD(+) contacts are provided by residues D244 and 293–295 (GIG). Positions 295 and 297 each coordinate K(+). An IMP-binding site is contributed by S298. C300 contributes to the K(+) binding site. C300 serves as the catalytic Thioimidate intermediate. Residues 333–335 (DGG), 356–357 (GS), and 380–384 (YRGMG) each bind IMP. R396 functions as the Proton acceptor in the catalytic mechanism. E410 is an IMP binding site. E464, S465, and H466 together coordinate K(+).

It belongs to the IMPDH/GMPR family. Homotetramer. Requires K(+) as cofactor.

It carries out the reaction IMP + NAD(+) + H2O = XMP + NADH + H(+). It functions in the pathway purine metabolism; XMP biosynthesis via de novo pathway; XMP from IMP: step 1/1. Its activity is regulated as follows. Mycophenolic acid (MPA) is a non-competitive inhibitor that prevents formation of the closed enzyme conformation by binding to the same site as the amobile flap. In contrast, mizoribine monophosphate (MZP) is a competitive inhibitor that induces the closed conformation. MPA is a potent inhibitor of mammalian IMPDHs but a poor inhibitor of the bacterial enzymes. MZP is a more potent inhibitor of bacterial IMPDH. Its function is as follows. Catalyzes the conversion of inosine 5'-phosphate (IMP) to xanthosine 5'-phosphate (XMP), the first committed and rate-limiting step in the de novo synthesis of guanine nucleotides, and therefore plays an important role in the regulation of cell growth. In Helicobacter pylori (strain J99 / ATCC 700824) (Campylobacter pylori J99), this protein is Inosine-5'-monophosphate dehydrogenase.